The following is a 317-amino-acid chain: DNA-3-methyladenine glycosylase (317 aa).

The interval 1-76 (SKEPVSVVLP…KEKLSSTPGL (76 aa)) is disordered. The span at 53 to 64 (KKQQLAQSEQQQ) shows a compositional bias: low complexity. A phosphoserine mark is found at serine 84 and serine 258.

This sequence belongs to the DNA glycosylase MPG family. Binds MBD1. Binds SSBP1.

It is found in the cytoplasm. The protein resides in the mitochondrion matrix. Its subcellular location is the mitochondrion nucleoid. It localises to the nucleus. The enzyme catalyses Hydrolysis of alkylated DNA, releasing 3-methyladenine, 3-methylguanine, 7-methylguanine and 7-methyladenine.. Binding to SSBP1 in mitochondria inhibits glycosylase activity in the context of a single-stranded DNA (ssDNA), but not a double-stranded DNA (dsDNA) substrates. Its function is as follows. Hydrolysis of the deoxyribose N-glycosidic bond to excise 3-methyladenine, and 7-methylguanine from the damaged DNA polymer formed by alkylation lesions. The polypeptide is DNA-3-methyladenine glycosylase (Mpg) (Rattus norvegicus (Rat)).